We begin with the raw amino-acid sequence, 204 residues long: LexA repressor (204 aa).

The segment at residues Val28–Asp48 is a DNA-binding region (H-T-H motif). Catalysis depends on for autocatalytic cleavage activity residues Ser126 and Lys164.

This sequence belongs to the peptidase S24 family. Homodimer.

The catalysed reaction is Hydrolysis of Ala-|-Gly bond in repressor LexA.. In terms of biological role, represses a number of genes involved in the response to DNA damage (SOS response), including recA and lexA. In the presence of single-stranded DNA, RecA interacts with LexA causing an autocatalytic cleavage which disrupts the DNA-binding part of LexA, leading to derepression of the SOS regulon and eventually DNA repair. The chain is LexA repressor from Exiguobacterium sibiricum (strain DSM 17290 / CCUG 55495 / CIP 109462 / JCM 13490 / 255-15).